A 5147-amino-acid polypeptide reads, in one-letter code: Cadherin-related tumor suppressor (5147 aa).

An N-terminal signal peptide occupies residues 1–35 (MERLLLLFFLLLAGRESLCQTGDTKLELLAPRGRS). Cadherin domains are found at residues 36–156 (YATT…SPEF), 157–270 (PEPS…PPIF), 271–382 (DHSD…DPII), 383–494 (SFRF…EPVF), 495–599 (EKSE…APQF), 600–708 (SQRE…DPQF), 709–820 (YPRH…LEML), 821–942 (ECGQ…APVF), 943–1049 (ALDR…TPVF), 1050–1153 (DHTS…APQF), 1154–1278 (TNST…APEF), 1279–1384 (LRAP…APEF), 1385–1489 (TQSS…PPIF), 1490–1601 (PSTA…APVF), 1602–1713 (VSMN…VPQF), 1714–1823 (EQRS…PPQF), 1824–1922 (LDTP…PPLF), 1923–2027 (EDTV…APIF), 2028–2167 (DPMS…VPVF), 2168–2278 (ISAN…SPVF), 2279–2385 (DPKQ…PTFL), 2386–2491 (DSPY…DPVF), 2492–2596 (ELQS…IPKF), 2597–2703 (DSTT…FPTF), 2704–2810 (AYMA…APVM), 2811–2913 (EQLI…PPKF), 2914–3013 (TRLF…APEF), 3014–3124 (EHSF…PPKF), 3125–3229 (EQAE…TPRF), 3230–3334 (SVNS…PPVF), 3335–3439 (NHKE…YPQF), 3440–3545 (LQPV…PPEF), 3546–3651 (IKHY…GPTF), and 3652–3756 (TPEG…NPST). Over 36 to 4583 (YATTYEQYAA…GQDAAQVADP (4548 aa)) the chain is Extracellular. 6 N-linked (GlcNAc...) asparagine glycosylation sites follow: asparagine 239, asparagine 257, asparagine 276, asparagine 280, asparagine 402, and asparagine 461. Asparagine 605 and asparagine 631 each carry an N-linked (GlcNAc...) asparagine glycan. Asparagine 1155, asparagine 1367, and asparagine 1458 each carry an N-linked (GlcNAc...) asparagine glycan. Residues asparagine 1751, asparagine 1831, and asparagine 1880 are each glycosylated (N-linked (GlcNAc...) asparagine). Residues asparagine 2080, asparagine 2171, asparagine 2247, asparagine 2290, asparagine 2437, and asparagine 2581 are each glycosylated (N-linked (GlcNAc...) asparagine). Residue asparagine 2799 is glycosylated (N-linked (GlcNAc...) asparagine). N-linked (GlcNAc...) asparagine glycosylation is found at asparagine 2920, asparagine 2946, and asparagine 2967. N-linked (GlcNAc...) asparagine glycans are attached at residues asparagine 3167, asparagine 3303, asparagine 3386, asparagine 3389, and asparagine 3525. N-linked (GlcNAc...) asparagine glycosylation is found at asparagine 3852, asparagine 3865, and asparagine 3905. 4 EGF-like domains span residues 3950-4011 (GYEP…EQCS), 4013-4049 (RQDP…KHCE), 4052-4090 (RSDV…NQCE), and 4092-4128 (VSDS…RHCE). 16 cysteine pairs are disulfide-bonded: cysteine 3954–cysteine 3966, cysteine 3960–cysteine 3999, cysteine 4001–cysteine 4010, cysteine 4017–cysteine 4028, cysteine 4022–cysteine 4037, cysteine 4039–cysteine 4048, cysteine 4056–cysteine 4067, cysteine 4061–cysteine 4078, cysteine 4080–cysteine 4089, cysteine 4096–cysteine 4107, cysteine 4101–cysteine 4116, cysteine 4118–cysteine 4127, cysteine 4294–cysteine 4320, cysteine 4325–cysteine 4341, cysteine 4334–cysteine 4350, and cysteine 4352–cysteine 4361. The Laminin G-like 1 domain occupies 4129-4320 (RFSYGFQPLS…LQQKGILAGC (192 aa)). Asparagine 4306 carries an N-linked (GlcNAc...) asparagine glycan. Residues 4321–4362 (NRQACQPALAAERCGGFAGQCIDRWSSSLCQCGGHLQSPDCS) form the EGF-like 5 domain. The Laminin G-like 2 domain occupies 4402–4569 (DNQQMRERRA…RYHGKIESGC (168 aa)). 5 N-linked (GlcNAc...) asparagine glycosylation sites follow: asparagine 4414, asparagine 4471, asparagine 4487, asparagine 4539, and asparagine 4550. The cysteines at positions 4536 and 4569 are disulfide-linked. A helical transmembrane segment spans residues 4584 to 4609 (LSIGFTLVIVFFVILVVAILGSYVIY). Topologically, residues 4610-5147 (RFRGKQEKIG…NGPAAPEEYV (538 aa)) are cytoplasmic. The tract at residues 4744–4771 (PEHYDLENASSIAPSDIDIVYHYKGYRE) is essential for stability of mitochondrial electron chain complexes I and V, and promotes interaction with ND-24. Disordered regions lie at residues 4787 to 4850 (AYTH…SQQP), 4871 to 4921 (TSSS…QTSM), and 4967 to 5041 (GDVD…PIPP). Residues 4826–4835 (SASRTHQSTP) are compositionally biased toward polar residues. Composition is skewed to low complexity over residues 4838–4850 (RLSP…SQQP) and 4891–4918 (SPVM…QAQQ). The residue at position 4843 (serine 4843) is a Phosphoserine. Over residues 4972-5008 (HSSTSTDESGNDSFTCSEIEYDNNSLSGDGKYSTSKS) the composition is skewed to polar residues. Serine 5054 and serine 5061 each carry phosphoserine. Residues 5113–5147 (PDTNGPSQQQQQQTQVVSTLRMPSSNGPAAPEEYV) form a disordered region. The span at 5119–5131 (SQQQQQQTQVVST) shows a compositional bias: low complexity.

In terms of assembly, interacts with Fbxl7. Ft-mito interacts with NADH dehydrogenase subunit ND-24 and with ATP synthase subunit ATPsynC. Post-translationally, phosphorylated by fj on Ser/Thr of cadherin domains. Phosphorylation by fj enhances binding to ds. Phosphorylated in the cytoplasmic domain in a dco-dependent manner which is promoted by ds. Proteolytically cleaved to yield stably associated N- and C-terminal fragments. The C-terminal fragment is processed further to release a 68 kDa mitochondrial fragment, Ft-mito.

The protein localises to the cell membrane. Its subcellular location is the apical cell membrane. The protein resides in the mitochondrion. Its function is as follows. Involved in regulation of planar cell polarity in the compound eye where it is required for correct specification of the R3 and R4 photoreceptor cells by regulating Fz activity in the R3/R4 precursor cells. This is likely to occur through creation of an ft gradient so that the equatorial R3/R4 precursor cell has a higher level of ft function than its polar neighbor. Also required for planar cell polarity of wing hairs. Mediates heterophilic cell adhesion in vitro and is required to stabilize ds on the cell surface. Involved in regulation of eye imaginal disk size. Upstream component of the Hippo pathway where it is likely to act as a cell surface receptor involved in regulation of tissue size and is required for the localization and stability of ex. Probably acts as a cell surface receptor for ds. Functionally, regulates mitochondrial electron transport chain integrity and promotes oxidative phosphorylation. This chain is Cadherin-related tumor suppressor, found in Drosophila melanogaster (Fruit fly).